A 263-amino-acid chain; its full sequence is tRNA1(Val) (adenine(37)-N6)-methyltransferase (263 aa).

The protein belongs to the methyltransferase superfamily. tRNA (adenine-N(6)-)-methyltransferase family.

It is found in the cytoplasm. The catalysed reaction is adenosine(37) in tRNA1(Val) + S-adenosyl-L-methionine = N(6)-methyladenosine(37) in tRNA1(Val) + S-adenosyl-L-homocysteine + H(+). In terms of biological role, specifically methylates the adenine in position 37 of tRNA(1)(Val) (anticodon cmo5UAC). In Pseudoalteromonas atlantica (strain T6c / ATCC BAA-1087), this protein is tRNA1(Val) (adenine(37)-N6)-methyltransferase.